The chain runs to 95 residues: CRISPR-associated endoribonuclease Cas2 1 (95 aa).

D11 is a binding site for Mg(2+).

It belongs to the CRISPR-associated endoribonuclease Cas2 protein family. Homodimer, forms a heterotetramer with a Cas1 homodimer. Requires Mg(2+) as cofactor.

Its function is as follows. CRISPR (clustered regularly interspaced short palindromic repeat), is an adaptive immune system that provides protection against mobile genetic elements (viruses, transposable elements and conjugative plasmids). CRISPR clusters contain sequences complementary to antecedent mobile elements and target invading nucleic acids. CRISPR clusters are transcribed and processed into CRISPR RNA (crRNA). Functions as a ssRNA-specific endoribonuclease. Involved in the integration of spacer DNA into the CRISPR cassette. The protein is CRISPR-associated endoribonuclease Cas2 1 of Methanospirillum hungatei JF-1 (strain ATCC 27890 / DSM 864 / NBRC 100397 / JF-1).